The following is a 306-amino-acid chain: Pantothenate kinase (306 aa).

90 to 97 is an ATP binding site; sequence GSVAVGKS.

This sequence belongs to the prokaryotic pantothenate kinase family.

It is found in the cytoplasm. It carries out the reaction (R)-pantothenate + ATP = (R)-4'-phosphopantothenate + ADP + H(+). It participates in cofactor biosynthesis; coenzyme A biosynthesis; CoA from (R)-pantothenate: step 1/5. This chain is Pantothenate kinase, found in Ligilactobacillus salivarius (strain UCC118) (Lactobacillus salivarius).